Reading from the N-terminus, the 247-residue chain is Cell division protein ZapD (247 aa).

It belongs to the ZapD family. In terms of assembly, interacts with FtsZ.

The protein resides in the cytoplasm. Its function is as follows. Cell division factor that enhances FtsZ-ring assembly. Directly interacts with FtsZ and promotes bundling of FtsZ protofilaments, with a reduction in FtsZ GTPase activity. This is Cell division protein ZapD from Escherichia coli O17:K52:H18 (strain UMN026 / ExPEC).